A 488-amino-acid polypeptide reads, in one-letter code: Ribulose bisphosphate carboxylase large chain (488 aa).

The substrate site is built by asparagine 127 and threonine 177. Lysine 179 functions as the Proton acceptor in the catalytic mechanism. Lysine 181 provides a ligand contact to substrate. Residues lysine 205, aspartate 207, and glutamate 208 each contribute to the Mg(2+) site. The residue at position 205 (lysine 205) is an N6-carboxylysine. Residue histidine 297 is the Proton acceptor of the active site. Substrate-binding residues include arginine 298, histidine 330, and serine 382.

Belongs to the RuBisCO large chain family. Type I subfamily. In terms of assembly, heterohexadecamer of 8 large chains and 8 small chains. The cofactor is Mg(2+).

Its subcellular location is the plastid. The protein resides in the chloroplast. The catalysed reaction is 2 (2R)-3-phosphoglycerate + 2 H(+) = D-ribulose 1,5-bisphosphate + CO2 + H2O. It carries out the reaction D-ribulose 1,5-bisphosphate + O2 = 2-phosphoglycolate + (2R)-3-phosphoglycerate + 2 H(+). Functionally, ruBisCO catalyzes two reactions: the carboxylation of D-ribulose 1,5-bisphosphate, the primary event in carbon dioxide fixation, as well as the oxidative fragmentation of the pentose substrate in the photorespiration process. Both reactions occur simultaneously and in competition at the same active site. The sequence is that of Ribulose bisphosphate carboxylase large chain from Emiliania huxleyi (Coccolithophore).